We begin with the raw amino-acid sequence, 315 residues long: Solute carrier family 25 member 32 (315 aa).

3 Solcar repeats span residues 20–109 (HVRY…IKSY), 118–209 (LEAT…LKLK), and 222–306 (LSTV…VSHF). 6 helical membrane passes run 26 to 43 (LVAGVSGGVLSNLALHPL), 89 to 106 (VWGAGLSWGLYFFFYNAI), 123 to 143 (YLVSAAEAGAMTLCITNPLWV), 186 to 203 (FVPGLFGTSHGALQFMAY), 227 to 243 (YISVAALSKIFAVAATY), and 281 to 300 (GIAPNLIRVTPACCITFVVY).

This sequence belongs to the mitochondrial carrier (TC 2.A.29) family.

Its subcellular location is the mitochondrion inner membrane. It catalyses the reaction FAD(in) = FAD(out). Its function is as follows. Facilitates flavin adenine dinucleotide (FAD) translocation across the mitochondrial inner membrane into the mitochondrial matrix where it acts as a redox cofactor to assist flavoenzyme activities in fundamental metabolic processes including fatty acid beta-oxidation, amino acid and choline metabolism as well as mitochondrial electron transportation. In particular, provides FAD to DLD dehydrogenase of the glycine cleavage system, part of mitochondrial one-carbon metabolic pathway involved in neural tube closure in early embryogenesis. The sequence is that of Solute carrier family 25 member 32 from Macaca fascicularis (Crab-eating macaque).